A 758-amino-acid chain; its full sequence is EMILIN-3 (758 aa).

Positions 1-21 are cleaved as a signal peptide; it reads MGRRLSVWLCTVAALLSGAQA. In terms of domain architecture, EMI spans 54 to 130; the sequence is HKSLCAYVVH…PGLTGESCPE (77 aa). 3 cysteine pairs are disulfide-bonded: Cys58-Cys120, Cys85-Cys91, and Cys119-Cys128. Asn65 carries N-linked (GlcNAc...) asparagine glycosylation. Residues 131 to 178 are disordered; it reads HLTDHGATPPHQEPEPQIPLGQLGPGPRPSPYSREAPRPRGRKGQGPF. Positions 379–401 form a coiled coil; it reads SQLALISARVDSLERNLQAVTET. Residue Asn436 is glycosylated (N-linked (GlcNAc...) asparagine). Coiled-coil stretches lie at residues 460 to 483 and 528 to 567; these read GSTL…ELSP and AEVK…QLAE. N-linked (GlcNAc...) asparagine glycans are attached at residues Asn555 and Asn609. 2 coiled-coil regions span residues 642–677 and 720–753; these read RQVL…ELQH and HIDK…AEVR. Asn725 carries an N-linked (GlcNAc...) asparagine glycan.

It is found in the secreted. Its subcellular location is the extracellular space. It localises to the extracellular matrix. The protein resides in the cytoplasm. This is EMILIN-3 (Emilin3) from Mus musculus (Mouse).